The sequence spans 124 residues: Small ribosomal subunit protein uS12 (124 aa).

The residue at position 89 (D89) is a 3-methylthioaspartic acid.

This sequence belongs to the universal ribosomal protein uS12 family. Part of the 30S ribosomal subunit. Contacts proteins S8 and S17. May interact with IF1 in the 30S initiation complex.

In terms of biological role, with S4 and S5 plays an important role in translational accuracy. Its function is as follows. Interacts with and stabilizes bases of the 16S rRNA that are involved in tRNA selection in the A site and with the mRNA backbone. Located at the interface of the 30S and 50S subunits, it traverses the body of the 30S subunit contacting proteins on the other side and probably holding the rRNA structure together. The combined cluster of proteins S8, S12 and S17 appears to hold together the shoulder and platform of the 30S subunit. This is Small ribosomal subunit protein uS12 from Nitratiruptor sp. (strain SB155-2).